We begin with the raw amino-acid sequence, 204 residues long: GTP cyclohydrolase 1 (204 aa).

Zn(2+)-binding residues include cysteine 92, histidine 95, and cysteine 165.

It belongs to the GTP cyclohydrolase I family. In terms of assembly, homomer.

It catalyses the reaction GTP + H2O = 7,8-dihydroneopterin 3'-triphosphate + formate + H(+). Its pathway is cofactor biosynthesis; 7,8-dihydroneopterin triphosphate biosynthesis; 7,8-dihydroneopterin triphosphate from GTP: step 1/1. This Mycolicibacterium paratuberculosis (strain ATCC BAA-968 / K-10) (Mycobacterium paratuberculosis) protein is GTP cyclohydrolase 1.